The primary structure comprises 521 residues: Probable ATP-dependent RNA helicase Dbp45A (521 aa).

The short motif at 7–35 (NPFQILGLRPWLVKQLTKLGLKGATPIQQ) is the Q motif element. The 172-residue stretch at 38–209 (IPAILAGQDC…IFPIASDCFE (172 aa)) folds into the Helicase ATP-binding domain. 51–58 (AKTGSGKT) lines the ATP pocket. A DEAD box motif is present at residues 157-160 (DEAD). A Helicase C-terminal domain is found at 237 to 386 (VLIEALRKYR…EHPIDQRMVE (150 aa)). Residues 448–521 (KRKLQHAEPA…GRADVKKDKA (74 aa)) form a disordered region. 2 stretches are compositionally biased toward basic and acidic residues: residues 460–482 (EEGKALLQDERFKSVDSARFEKK) and 502–521 (LNKEKPVAQKGRADVKKDKA).

Belongs to the DEAD box helicase family. DDX49/DBP8 subfamily.

It carries out the reaction ATP + H2O = ADP + phosphate + H(+). Functionally, probable ATP-binding RNA helicase. The protein is Probable ATP-dependent RNA helicase Dbp45A (Dbp45A) of Drosophila melanogaster (Fruit fly).